Here is a 569-residue protein sequence, read N- to C-terminus: Laccase-14 (569 aa).

Residues 1–33 (MEFKLNIPNTIIKTLQTIVFFLFVLLAFQIAEA) form the signal peptide. Plastocyanin-like domains follow at residues 41–157 (KIKS…PKRG) and 167–320 (REIP…YKGD). The N-linked (GlcNAc...) asparagine glycan is linked to asparagine 87. Histidine 91, histidine 93, histidine 136, and histidine 138 together coordinate Cu cation. N-linked (GlcNAc...) asparagine glycans are attached at residues asparagine 190, asparagine 249, asparagine 336, asparagine 374, asparagine 395, asparagine 430, and asparagine 452. Residues 420–553 (DFPRNPPTKF…NTVFIVKDGP (134 aa)) form the Plastocyanin-like 3 domain. Positions 470, 473, 475, 532, 533, 534, 538, and 543 each coordinate Cu cation.

This sequence belongs to the multicopper oxidase family. Requires Cu cation as cofactor. As to expression, expressed at low levels in flowers and siliques.

It localises to the secreted. The protein localises to the extracellular space. Its subcellular location is the apoplast. It carries out the reaction 4 hydroquinone + O2 = 4 benzosemiquinone + 2 H2O. Its function is as follows. Lignin degradation and detoxification of lignin-derived products. This is Laccase-14 (LAC14) from Arabidopsis thaliana (Mouse-ear cress).